The chain runs to 130 residues: Ribosome-binding factor A (130 aa).

It belongs to the RbfA family. In terms of assembly, monomer. Binds 30S ribosomal subunits, but not 50S ribosomal subunits or 70S ribosomes.

The protein localises to the cytoplasm. One of several proteins that assist in the late maturation steps of the functional core of the 30S ribosomal subunit. Associates with free 30S ribosomal subunits (but not with 30S subunits that are part of 70S ribosomes or polysomes). Required for efficient processing of 16S rRNA. May interact with the 5'-terminal helix region of 16S rRNA. In Pseudomonas aeruginosa (strain LESB58), this protein is Ribosome-binding factor A.